We begin with the raw amino-acid sequence, 427 residues long: O-methyltransferase sol2 (427 aa).

Asp-281 is a binding site for S-adenosyl-L-methionine. Catalysis depends on His-327, which acts as the Proton acceptor.

This sequence belongs to the class I-like SAM-binding methyltransferase superfamily. Cation-independent O-methyltransferase family. COMT subfamily.

Its pathway is phytotoxin biosynthesis. Its function is as follows. O-methyltransferase; part of the gene cluster that mediates the biosynthesis of the phytotoxin solanapyrone, a causal agent of early blight disease of potato and tomato. The prosolanapyrone synthase sol1 is a polyketide synthase that produces the octaketide desmethylprosolanapyrone I via sequential condensations of 7 malonyl-CoA units with one acetyl-CoA unit, and one methylation step. The octaketide backbone is further methylated by the sol2 O-methyltransferase to yield prosolanapyrone I. Prosolanapyrone I is hydroxylated to prosolanapyrone II by the cytochrome P450 monooxygenase sol6. The solanapyrone synthase sol5 then catalyzes the oxidation of prosolanapyrone II and the subsequent Diels Alder cycloisomerization of the product prosolanapyrone III to solanapyrones A and D. Solanapyrones A and D are then converted into solanapyrones B and E, respectively, by the sol3 dehydrogenase. In Alternaria solani, this protein is O-methyltransferase sol2 (sol2).